We begin with the raw amino-acid sequence, 240 residues long: Ribosomal RNA small subunit methyltransferase J (240 aa).

Residues arginine 93–aspartate 94 and aspartate 162 each bind S-adenosyl-L-methionine.

This sequence belongs to the methyltransferase superfamily. RsmJ family.

The protein localises to the cytoplasm. It carries out the reaction guanosine(1516) in 16S rRNA + S-adenosyl-L-methionine = N(2)-methylguanosine(1516) in 16S rRNA + S-adenosyl-L-homocysteine + H(+). Its function is as follows. Specifically methylates the guanosine in position 1516 of 16S rRNA. This is Ribosomal RNA small subunit methyltransferase J from Francisella philomiragia subsp. philomiragia (strain ATCC 25017 / CCUG 19701 / FSC 153 / O#319-036).